Here is a 340-residue protein sequence, read N- to C-terminus: GTP 3',8-cyclase (340 aa).

The Radical SAM core domain occupies 8-227 (KLGRPIRDLR…EMIEQNFDIE (220 aa)). Residue R17 coordinates GTP. [4Fe-4S] cluster-binding residues include C24 and C28. Residue Y30 participates in S-adenosyl-L-methionine binding. C31 provides a ligand contact to [4Fe-4S] cluster. R71 lines the GTP pocket. G75 is a binding site for S-adenosyl-L-methionine. T102 lines the GTP pocket. S126 provides a ligand contact to S-adenosyl-L-methionine. K163 contributes to the GTP binding site. Position 197 (M197) interacts with S-adenosyl-L-methionine. Residues C261 and C264 each coordinate [4Fe-4S] cluster. 266–268 (RAR) is a GTP binding site. [4Fe-4S] cluster is bound at residue C278.

Belongs to the radical SAM superfamily. MoaA family. As to quaternary structure, monomer and homodimer. [4Fe-4S] cluster serves as cofactor.

It carries out the reaction GTP + AH2 + S-adenosyl-L-methionine = (8S)-3',8-cyclo-7,8-dihydroguanosine 5'-triphosphate + 5'-deoxyadenosine + L-methionine + A + H(+). Its pathway is cofactor biosynthesis; molybdopterin biosynthesis. In terms of biological role, catalyzes the cyclization of GTP to (8S)-3',8-cyclo-7,8-dihydroguanosine 5'-triphosphate. This Staphylococcus saprophyticus subsp. saprophyticus (strain ATCC 15305 / DSM 20229 / NCIMB 8711 / NCTC 7292 / S-41) protein is GTP 3',8-cyclase.